The primary structure comprises 874 residues: UPF0182 protein Sfum_2137 (874 aa).

7 consecutive transmembrane segments (helical) span residues tryptophan 7–leucine 27, isoleucine 57–alanine 77, serine 110–phenylalanine 130, arginine 171–glutamate 191, leucine 208–glutamine 228, valine 252–isoleucine 272, and proline 283–leucine 303.

This sequence belongs to the UPF0182 family.

Its subcellular location is the cell membrane. The protein is UPF0182 protein Sfum_2137 of Syntrophobacter fumaroxidans (strain DSM 10017 / MPOB).